A 287-amino-acid chain; its full sequence is tRNA pseudouridine synthase B (287 aa).

The active-site Nucleophile is Asp-37.

It belongs to the pseudouridine synthase TruB family. Type 1 subfamily.

The catalysed reaction is uridine(55) in tRNA = pseudouridine(55) in tRNA. Functionally, responsible for synthesis of pseudouridine from uracil-55 in the psi GC loop of transfer RNAs. The sequence is that of tRNA pseudouridine synthase B from Caldicellulosiruptor saccharolyticus (strain ATCC 43494 / DSM 8903 / Tp8T 6331).